Reading from the N-terminus, the 705-residue chain is Probable glutamate carboxypeptidase AMP1 (705 aa).

Topologically, residues 1-24 are cytoplasmic; the sequence is MSQPLTTRPTVTGISIIPFRQPPP. A helical; Signal-anchor for type II membrane protein membrane pass occupies residues 25-42; it reads LCSFLFVIVLFVATFYTL. Over 43-705 the chain is Extracellular; sequence HHPDAVTPPL…ASKALKGGFT (663 aa). 3 N-linked (GlcNAc...) asparagine glycosylation sites follow: Asn-74, Asn-137, and Asn-322. The catalytic stretch occupies residues 255–548; that stretch reads GVVGGEKLSL…GIWGLLGILL (294 aa). Residues His-356 and Asp-366 each coordinate Zn(2+). Catalysis depends on Glu-403, which acts as the Nucleophile. The Zn(2+) site is built by Glu-404, Asp-432, and His-514. A glycan (N-linked (GlcNAc...) asparagine) is linked at Asn-676.

It belongs to the peptidase M28 family. M28B subfamily. It depends on Zn(2+) as a cofactor. Expressed in all plant parts. Highest levels in the bolt stem, inflorescence, root and silique. Low level in leaves.

The protein localises to the endoplasmic reticulum membrane. The enzyme catalyses Release of an unsubstituted, C-terminal glutamyl residue, typically from Ac-Asp-Glu or folylpoly-gamma-glutamates.. In terms of biological role, may modulate the level of one or more small signaling molecules that have a role in regulating meristem function. May play a role in balancing and restricting the meristem-promoting activity of auxin signaling. Involved in ethylene and giberellin (GA) signaling pathways or in a parallel pathway controlling cell and hypocotyl elongation and cellular organization. Involved in abscisic acid (ABA) signaling pathway. Plays a negative role in ABA-mediated seed germination and seedling development. Acts in association with LAMP1 to suppress ectopic stem cell niche formation in the shoot apical meristem (SAM) independently of cytokinin signaling pathway. Modulates responses to ABA, oxidative stress and abotic stress. Acts as a negative regulator of the ABA signaling pathway to modulate freezing and drought stress responses. Mediates carbon and amino acid metabolism. May be involved in the acquisition and/or maintenance of seed dormancy. Involved in the regulation of response to heat shock and plant defense. The polypeptide is Probable glutamate carboxypeptidase AMP1 (Arabidopsis thaliana (Mouse-ear cress)).